The chain runs to 780 residues: Mediator of RNA polymerase II transcription subunit 15 (780 aa).

The tract at residues 1–124 (MSEEDWPSPK…PQPTSAQARN (124 aa)) is interaction with nhr-49. Residues 2-96 (SEEDWPSPKF…SPPCTTAALL (95 aa)) form an interaction with sbp-1 region. Disordered regions lie at residues 91-152 (TTAA…APSA), 166-363 (PSPD…QGMM), and 564-597 (GPGP…GTPN). Positions 125-139 (PPVTVATTQASTTPS) are enriched in low complexity. Over residues 225 to 245 (PPNGYGGYGMMNGPPGSGAPM) the composition is skewed to gly residues. The segment covering 296–316 (QGATPTGPSSVLESLINQPQQ) has biased composition (polar residues). Low complexity-rich tracts occupy residues 333 to 353 (AAQR…QQQR) and 574 to 594 (SMSG…NPMG).

This sequence belongs to the Mediator complex subunit 15 family. In terms of assembly, component of the Mediator complex. Interacts with nhr-49, nhr-64 and sbp-1. In terms of tissue distribution, expressed in the intestine and head neurons.

The protein localises to the nucleus. Functionally, component of the Mediator complex, a coactivator involved in regulated gene transcription of nearly all RNA polymerase II-dependent genes. Mediator functions as a bridge to convey information from gene-specific regulatory proteins to the basal RNA polymerase II transcription machinery. Mediator is recruited to promoters by direct interactions with regulatory proteins and serves as a scaffold for the assembly of a functional preinitiation complex with RNA polymerase II and the general transcription factors. Required for regulated expression of genes controlling fatty acid desaturation by transcription factors including sbp-1 and nhr-49. Involved in the response to simulated microgravity, in concert with sbp-1, probably acting in the intestine. This is Mediator of RNA polymerase II transcription subunit 15 (mdt-15) from Caenorhabditis elegans.